Consider the following 81-residue polypeptide: ATP synthase subunit c (81 aa).

Transmembrane regions (helical) follow at residues 5-25 and 57-77; these read VAAA…IGPG and LAFM…LLFA.

The protein belongs to the ATPase C chain family. In terms of assembly, F-type ATPases have 2 components, F(1) - the catalytic core - and F(0) - the membrane proton channel. F(1) has five subunits: alpha(3), beta(3), gamma(1), delta(1), epsilon(1). F(0) has four main subunits: a(1), b(1), b'(1) and c(10-14). The alpha and beta chains form an alternating ring which encloses part of the gamma chain. F(1) is attached to F(0) by a central stalk formed by the gamma and epsilon chains, while a peripheral stalk is formed by the delta, b and b' chains.

Its subcellular location is the cellular thylakoid membrane. In terms of biological role, f(1)F(0) ATP synthase produces ATP from ADP in the presence of a proton or sodium gradient. F-type ATPases consist of two structural domains, F(1) containing the extramembraneous catalytic core and F(0) containing the membrane proton channel, linked together by a central stalk and a peripheral stalk. During catalysis, ATP synthesis in the catalytic domain of F(1) is coupled via a rotary mechanism of the central stalk subunits to proton translocation. Its function is as follows. Key component of the F(0) channel; it plays a direct role in translocation across the membrane. A homomeric c-ring of between 10-14 subunits forms the central stalk rotor element with the F(1) delta and epsilon subunits. In Microcystis aeruginosa (strain NIES-843 / IAM M-2473), this protein is ATP synthase subunit c.